The primary structure comprises 386 residues: Peroxisomal membrane protein PEX13 (386 aa).

The tract at residues 1–76 (MSSTAVPRPK…SSGTYGESNT (76 aa)) is disordered. The Lumenal portion of the chain corresponds to 1 to 263 (MSSTAVPRPK…KATRRKISWK (263 aa)). A compositionally biased stretch (polar residues) spans 23–39 (RNAQSLSAMMTSNQQDS). Residues 44-55 (ESNNSNSASESA) are compositionally biased toward low complexity. The segment covering 65–76 (LNSSGTYGESNT) has biased composition (polar residues). A helical membrane pass occupies residues 264–280 (PLLFFLMAVFGFPYLLN). Topologically, residues 281–386 (KFITKLQTSG…EHVDDETRTH (106 aa)) are cytoplasmic. An SH3 domain is found at 306–372 (SKLEFARALY…PYNYIEIIKR (67 aa)).

It belongs to the peroxin-13 family. As to quaternary structure, interacts (via SH3 domain) with PEX14 (via SH3-binding motif); forming the PEX13-PEX14 docking complex.

It localises to the peroxisome membrane. Its function is as follows. Component of the PEX13-PEX14 docking complex, a translocon channel that specifically mediates the import of peroxisomal cargo proteins bound to PEX5 or PEX21 receptors. The PEX13-PEX14 docking complex forms a large import pore which can be opened to a diameter of about 9 nm. Mechanistically, PEX5 (or PEX21) receptor along with cargo proteins associates with the PEX14 subunit of the PEX13-PEX14 docking complex in the cytosol, leading to the insertion of the receptor into the organelle membrane with the concomitant translocation of the cargo into the peroxisome matrix. The sequence is that of Peroxisomal membrane protein PEX13 from Saccharomyces cerevisiae (strain ATCC 204508 / S288c) (Baker's yeast).